A 120-amino-acid polypeptide reads, in one-letter code: Immunogenic miracidial antigen 5D (120 aa).

A disordered region spans residues 41-120 (HIDVGDEDYH…PKKYGSGYKH (80 aa)). Residues 45-66 (GDEDYHDGDDDVDYTDDVDDVD) are compositionally biased toward acidic residues.

It belongs to the immunogenic miracidial antigen family.

The chain is Immunogenic miracidial antigen 5D (5D) from Schistosoma japonicum (Blood fluke).